Here is a 98-residue protein sequence, read N- to C-terminus: Integration host factor subunit beta (98 aa).

It belongs to the bacterial histone-like protein family. As to quaternary structure, heterodimer of an alpha and a beta chain.

This protein is one of the two subunits of integration host factor, a specific DNA-binding protein that functions in genetic recombination as well as in transcriptional and translational control. In Pseudomonas entomophila (strain L48), this protein is Integration host factor subunit beta.